The primary structure comprises 352 residues: RNA 3'-terminal phosphate cyclase (352 aa).

Residues glutamine 100 and 297–301 each bind ATP; that span reads HLADQ. Histidine 322 (tele-AMP-histidine intermediate) is an active-site residue.

Belongs to the RNA 3'-terminal cyclase family. Type 1 subfamily.

Its subcellular location is the cytoplasm. It carries out the reaction a 3'-end 3'-phospho-ribonucleotide-RNA + ATP = a 3'-end 2',3'-cyclophospho-ribonucleotide-RNA + AMP + diphosphate. Its function is as follows. Catalyzes the conversion of 3'-phosphate to a 2',3'-cyclic phosphodiester at the end of RNA. The mechanism of action of the enzyme occurs in 3 steps: (A) adenylation of the enzyme by ATP; (B) transfer of adenylate to an RNA-N3'P to produce RNA-N3'PP5'A; (C) and attack of the adjacent 2'-hydroxyl on the 3'-phosphorus in the diester linkage to produce the cyclic end product. The biological role of this enzyme is unknown but it is likely to function in some aspects of cellular RNA processing. This is RNA 3'-terminal phosphate cyclase from Methanosarcina mazei (strain ATCC BAA-159 / DSM 3647 / Goe1 / Go1 / JCM 11833 / OCM 88) (Methanosarcina frisia).